The sequence spans 310 residues: HPr kinase/phosphorylase (310 aa).

Active-site residues include His-138 and Lys-159. 153–160 (GKSGVGKS) contacts ATP. Ser-160 is a Mg(2+) binding site. Catalysis depends on Asp-177, which acts as the Proton acceptor; for phosphorylation activity. Proton donor; for dephosphorylation activity. The tract at residues 201 to 210 (LEIRGLGIIN) is important for the catalytic mechanism of both phosphorylation and dephosphorylation. Position 202 (Glu-202) interacts with Mg(2+). Arg-243 is a catalytic residue. The segment at 264–269 (PVRPGR) is important for the catalytic mechanism of dephosphorylation.

It belongs to the HPrK/P family. In terms of assembly, homohexamer. Requires Mg(2+) as cofactor.

It catalyses the reaction [HPr protein]-L-serine + ATP = [HPr protein]-O-phospho-L-serine + ADP + H(+). The catalysed reaction is [HPr protein]-O-phospho-L-serine + phosphate + H(+) = [HPr protein]-L-serine + diphosphate. Functionally, catalyzes the ATP- as well as the pyrophosphate-dependent phosphorylation of a specific serine residue in HPr, a phosphocarrier protein of the phosphoenolpyruvate-dependent sugar phosphotransferase system (PTS). HprK/P also catalyzes the pyrophosphate-producing, inorganic phosphate-dependent dephosphorylation (phosphorolysis) of seryl-phosphorylated HPr (P-Ser-HPr). The two antagonistic activities of HprK/P are regulated by several intracellular metabolites, which change their concentration in response to the absence or presence of rapidly metabolisable carbon sources (glucose, fructose, etc.) in the growth medium. Also phosphorylates/dephosphorylates the HPr-like catabolite repression protein crh on a specific serine residue. Therefore, by controlling the phosphorylation state of HPr and crh, HPrK/P is a sensor enzyme that plays a major role in the regulation of carbon metabolism and sugar transport: it mediates carbon catabolite repression (CCR), and regulates PTS-catalyzed carbohydrate uptake and inducer exclusion. The sequence is that of HPr kinase/phosphorylase from Bacillus velezensis (strain DSM 23117 / BGSC 10A6 / LMG 26770 / FZB42) (Bacillus amyloliquefaciens subsp. plantarum).